A 316-amino-acid polypeptide reads, in one-letter code: Apolipoprotein E (316 aa).

Positions 1-18 are cleaved as a signal peptide; that stretch reads MKALWAVLVVTLLAGCLA. Repeat copies occupy residues 76–97, 98–119, 120–141, 142–163, 164–185, 186–207, 208–229, and 230–251. An 8 X 22 AA approximate tandem repeats region spans residues 76 to 251; the sequence is VLMEDTMTEL…RLEEVREQME (176 aa). M139 is subject to Methionine sulfoxide. S143 is subject to Phosphoserine. The LDL and other lipoprotein receptors binding stretch occupies residues 154-164; sequence HLRKLRKRLMR. A heparin-binding site is contributed by 158–161; the sequence is LRKR. Residues 206 to 286 form a lipid-binding and lipoprotein association region; the sequence is TANLGAGAGK…GWFEPLVEDM (81 aa). A heparin-binding site is contributed by 225-232; that stretch reads GARIRGRL. The homooligomerization stretch occupies residues 262–316; that stretch reads QQMRLQAEIFQARLKGWFEPLVEDMQRQWANLVEKIQASVAANPIPPSSVPQESQ. Residues 274 to 286 are specificity for association with VLDL; it reads RLKGWFEPLVEDM.

This sequence belongs to the apolipoprotein A1/A4/E family. Homotetramer. May interact with ABCA1; functionally associated with ABCA1 in the biogenesis of HDLs. May interact with APP/A4 amyloid-beta peptide; the interaction is extremely stable in vitro but its physiological significance is unclear. May interact with MAPT. May interact with MAP2. In the cerebrospinal fluid, interacts with secreted SORL1. Interacts with PMEL; this allows the loading of PMEL luminal fragment on ILVs to induce fibril nucleation. In terms of processing, APOE exists as multiple glycosylated and sialylated glycoforms within cells and in plasma. The extent of glycosylation and sialylation are tissue and context specific. Glycated in plasma VLDL. Post-translationally, phosphorylated by FAM20C in the extracellular medium.

The protein resides in the secreted. Its subcellular location is the extracellular space. It is found in the extracellular matrix. It localises to the extracellular vesicle. The protein localises to the endosome. The protein resides in the multivesicular body. Functionally, APOE is an apolipoprotein, a protein associating with lipid particles, that mainly functions in lipoprotein-mediated lipid transport between organs via the plasma and interstitial fluids. APOE is a core component of plasma lipoproteins and is involved in their production, conversion and clearance. Apolipoproteins are amphipathic molecules that interact both with lipids of the lipoprotein particle core and the aqueous environment of the plasma. As such, APOE associates with chylomicrons, chylomicron remnants, very low density lipoproteins (VLDL) and intermediate density lipoproteins (IDL) but shows a preferential binding to high-density lipoproteins (HDL). It also binds a wide range of cellular receptors including the LDL receptor/LDLR, the LDL receptor-related proteins LRP1, LRP2 and LRP8 and the very low-density lipoprotein receptor/VLDLR that mediate the cellular uptake of the APOE-containing lipoprotein particles. Finally, APOE also has a heparin-binding activity and binds heparan-sulfate proteoglycans on the surface of cells, a property that supports the capture and the receptor-mediated uptake of APOE-containing lipoproteins by cells. A main function of APOE is to mediate lipoprotein clearance through the uptake of chylomicrons, VLDLs, and HDLs by hepatocytes. APOE is also involved in the biosynthesis by the liver of VLDLs as well as their uptake by peripheral tissues ensuring the delivery of triglycerides and energy storage in muscle, heart and adipose tissues. By participating in the lipoprotein-mediated distribution of lipids among tissues, APOE plays a critical role in plasma and tissues lipid homeostasis. APOE is also involved in two steps of reverse cholesterol transport, the HDLs-mediated transport of cholesterol from peripheral tissues to the liver, and thereby plays an important role in cholesterol homeostasis. First, it is functionally associated with ABCA1 in the biogenesis of HDLs in tissues. Second, it is enriched in circulating HDLs and mediates their uptake by hepatocytes. APOE also plays an important role in lipid transport in the central nervous system, regulating neuron survival and sprouting. The sequence is that of Apolipoprotein E (Apoe) from Onychomys torridus (Southern grasshopper mouse).